A 478-amino-acid chain; its full sequence is Alpha-(1,3)-fucosyltransferase FucT (478 aa).

Residues Gly94, 186–189, Arg195, 222–225, Asn240, and 246–250 contribute to the substrate site; these read VASN, VKNK, and YVTEK. Residues 347–353 are important for acceptor specificity; the sequence is DNPFIFC. 10 repeat units span residues 364 to 370, 371 to 377, 378 to 384, 385 to 391, 392 to 398, 399 to 405, 406 to 412, 413 to 419, 420 to 426, and 427 to 433. The tract at residues 364–433 is 10 X 7 AA tandem repeat of D-D-L-R-[IV]-N-Y; sequence DDLRVNYDDL…VNYDDLRVNY (70 aa). Positions 434-478 are may be involved in membrane binding; the sequence is ERLLSKATPLLELSQNTTSKIYRKAYQKSLPLLRAIRRWVKKLGL.

This sequence belongs to the glycosyltransferase 10 family. In terms of assembly, homodimer.

It localises to the membrane. It is found in the cytoplasm. The enzyme catalyses a beta-D-galactosyl-(1-&gt;4)-N-acetyl-beta-D-glucosaminyl derivative + GDP-beta-L-fucose = a beta-D-galactosyl-(1-&gt;4)-[alpha-L-fucosyl-(1-&gt;3)]-N-acetyl-beta-D-glucosaminyl derivative + GDP + H(+). The protein operates within lipopolysaccharide biosynthesis; LPS oligosaccharide biosynthesis. In terms of biological role, involved in the biosynthesis of the Lewis X (LeX) trisaccharide of the lipopolysaccharide (LPS) O-antigen. Catalyzes the addition of fucose in alpha 1-3 linkage to Gal-beta-1-4-GlcNAc-beta-O-R (LacNAc-R) type II acceptor. This chain is Alpha-(1,3)-fucosyltransferase FucT, found in Helicobacter pylori (Campylobacter pylori).